The primary structure comprises 430 residues: Divergent protein kinase domain 2A (430 aa).

Residues 1–35 (MWRLVPPKLGRLSRSLKLAALGSLLVLMVLHSPSL) form the signal peptide.

This sequence belongs to the DIPK family.

Its subcellular location is the cytoplasmic vesicle. It is found in the COPI-coated vesicle. The protein localises to the golgi apparatus. It localises to the secreted. In terms of biological role, may play a role in cardiomyocyte proliferation through paracrine signaling and activation of the PPI3K-AKT-CDK7 signaling cascade. The chain is Divergent protein kinase domain 2A from Homo sapiens (Human).